The following is a 391-amino-acid chain: Solute carrier family 35 member F2 (391 aa).

The next 10 membrane-spanning stretches (helical) occupy residues methionine 39–threonine 59, leucine 73–valine 93, tryptophan 108–alanine 128, isoleucine 137–leucine 157, phenylalanine 165–methionine 185, leucine 200–glutamine 220, valine 230–isoleucine 250, leucine 267–isoleucine 287, alanine 294–phenylalanine 314, and phenylalanine 318–serine 338. Positions valine 361 to alanine 391 are disordered. The span at serine 365 to glutamine 380 shows a compositional bias: polar residues.

The protein belongs to the SLC35F solute transporter family.

Its subcellular location is the membrane. In terms of biological role, putative solute transporter. The sequence is that of Solute carrier family 35 member F2 (slc35f2) from Xenopus tropicalis (Western clawed frog).